The primary structure comprises 155 residues: Ribosomal RNA large subunit methyltransferase H (155 aa).

S-adenosyl-L-methionine contacts are provided by residues leucine 72, glycine 104, and 123 to 128 (LSKMTF).

The protein belongs to the RNA methyltransferase RlmH family. Homodimer.

The protein resides in the cytoplasm. It catalyses the reaction pseudouridine(1915) in 23S rRNA + S-adenosyl-L-methionine = N(3)-methylpseudouridine(1915) in 23S rRNA + S-adenosyl-L-homocysteine + H(+). Functionally, specifically methylates the pseudouridine at position 1915 (m3Psi1915) in 23S rRNA. This Cytophaga hutchinsonii (strain ATCC 33406 / DSM 1761 / CIP 103989 / NBRC 15051 / NCIMB 9469 / D465) protein is Ribosomal RNA large subunit methyltransferase H.